The primary structure comprises 200 residues: ADP-ribose 1''-phosphate phosphatase (200 aa).

Residues 1 to 200 (MDLPSVQSKI…EVTVVRPHGG (200 aa)) form the Macro domain. Substrate-binding positions include 15–17 (GDL), 29–31 (ACN), 36–41 (WGKGIA), and 169–175 (FNAGLFG).

Belongs to the POA1 family.

It carries out the reaction ADP-alpha-D-ribose 1''-phosphate + H2O = ADP-D-ribose + phosphate. In terms of biological role, highly specific phosphatase involved in the metabolism of ADP-ribose 1''-phosphate (Appr1p) which is produced as a consequence of tRNA splicing. The protein is ADP-ribose 1''-phosphate phosphatase (poa1) of Neosartorya fischeri (strain ATCC 1020 / DSM 3700 / CBS 544.65 / FGSC A1164 / JCM 1740 / NRRL 181 / WB 181) (Aspergillus fischerianus).